The sequence spans 81 residues: Putative membrane protein insertion efficiency factor (81 aa).

It belongs to the UPF0161 family.

Its subcellular location is the cell inner membrane. In terms of biological role, could be involved in insertion of integral membrane proteins into the membrane. The chain is Putative membrane protein insertion efficiency factor from Pseudomonas syringae pv. syringae (strain B728a).